A 514-amino-acid polypeptide reads, in one-letter code: 2,3-bisphosphoglycerate-independent phosphoglycerate mutase (514 aa).

2 residues coordinate Mn(2+): Asp14 and Ser64. The active-site Phosphoserine intermediate is Ser64. Substrate contacts are provided by residues His125, Arg155 to Asp156, Arg187, Arg193, Arg263 to Arg266, and Lys336. 5 residues coordinate Mn(2+): Asp403, His407, Asp444, His445, and His463.

It belongs to the BPG-independent phosphoglycerate mutase family. In terms of assembly, monomer. It depends on Mn(2+) as a cofactor.

The catalysed reaction is (2R)-2-phosphoglycerate = (2R)-3-phosphoglycerate. Its pathway is carbohydrate degradation; glycolysis; pyruvate from D-glyceraldehyde 3-phosphate: step 3/5. Functionally, catalyzes the interconversion of 2-phosphoglycerate and 3-phosphoglycerate. The protein is 2,3-bisphosphoglycerate-independent phosphoglycerate mutase of Shewanella baltica (strain OS185).